Consider the following 664-residue polypeptide: Methionine--tRNA ligase (664 aa).

A 'HIGH' region motif is present at residues 15-25; sequence YYPSGKAHIGH. Residues 310-314 carry the 'KMSKS' region motif; that stretch reads KMSKS. Lys-313 contacts ATP. Residues 563–664 form the tRNA-binding domain; it reads DFDKIDLRVA…SALPNGAKVK (102 aa).

This sequence belongs to the class-I aminoacyl-tRNA synthetase family. MetG type 2B subfamily. Homodimer.

The protein localises to the cytoplasm. The enzyme catalyses tRNA(Met) + L-methionine + ATP = L-methionyl-tRNA(Met) + AMP + diphosphate. Is required not only for elongation of protein synthesis but also for the initiation of all mRNA translation through initiator tRNA(fMet) aminoacylation. In Listeria innocua serovar 6a (strain ATCC BAA-680 / CLIP 11262), this protein is Methionine--tRNA ligase (metG).